A 210-amino-acid chain; its full sequence is Pyridoxine/pyridoxamine 5'-phosphate oxidase (210 aa).

Residues 7–10 (REDY) and Lys65 contribute to the substrate site. Residues 60-65 (RMVLLK), 75-76 (FT), Arg81, Lys82, and Gln104 contribute to the FMN site. Residues Tyr122, Arg126, and Ser130 each contribute to the substrate site. FMN is bound by residues 139 to 140 (QS) and Trp183. 189–191 (RLH) contributes to the substrate binding site. Arg193 provides a ligand contact to FMN.

The protein belongs to the pyridoxamine 5'-phosphate oxidase family. As to quaternary structure, homodimer. FMN serves as cofactor.

It carries out the reaction pyridoxamine 5'-phosphate + O2 + H2O = pyridoxal 5'-phosphate + H2O2 + NH4(+). The enzyme catalyses pyridoxine 5'-phosphate + O2 = pyridoxal 5'-phosphate + H2O2. Its pathway is cofactor metabolism; pyridoxal 5'-phosphate salvage; pyridoxal 5'-phosphate from pyridoxamine 5'-phosphate: step 1/1. It functions in the pathway cofactor metabolism; pyridoxal 5'-phosphate salvage; pyridoxal 5'-phosphate from pyridoxine 5'-phosphate: step 1/1. Its function is as follows. Catalyzes the oxidation of either pyridoxine 5'-phosphate (PNP) or pyridoxamine 5'-phosphate (PMP) into pyridoxal 5'-phosphate (PLP). The polypeptide is Pyridoxine/pyridoxamine 5'-phosphate oxidase (Neisseria meningitidis serogroup A / serotype 4A (strain DSM 15465 / Z2491)).